Consider the following 37-residue polypeptide: Protamine Z3 (37 aa).

The disordered stretch occupies residues 1–37 (ARSRSRRSYGRGRRRGGRRRRRRRRRRRGGRRGRRSR).

Testis.

Its subcellular location is the nucleus. It localises to the chromosome. In terms of biological role, protamines substitute for histones in the chromatin of sperm during the haploid phase of spermatogenesis. They compact sperm DNA into a highly condensed, stable and inactive complex. This chain is Protamine Z3, found in Scyliorhinus canicula (Small-spotted catshark).